Here is a 234-residue protein sequence, read N- to C-terminus: MTNQLIYKGKAKDIYSTKDENVIRTVYKDQATMLNGARKETIDGKGALNNQISSLIFEKLNKAGVATHYIEQISKNEQLNKKVDIIPLEVVLRNVTAGSFSKRFGVEEGRVLETPIVEFYYKNDDLNDPFINDEHVKFLGIVNDEEIAYLKGETRRINELLKCWFAQIGLNLIDFKLEFGFDQEGTIILADEFSPDNCRLWDKNGNHMDKDVFRRDLGNLTDVYQVVLEKLIAL.

The protein belongs to the SAICAR synthetase family.

It catalyses the reaction 5-amino-1-(5-phospho-D-ribosyl)imidazole-4-carboxylate + L-aspartate + ATP = (2S)-2-[5-amino-1-(5-phospho-beta-D-ribosyl)imidazole-4-carboxamido]succinate + ADP + phosphate + 2 H(+). The protein operates within purine metabolism; IMP biosynthesis via de novo pathway; 5-amino-1-(5-phospho-D-ribosyl)imidazole-4-carboxamide from 5-amino-1-(5-phospho-D-ribosyl)imidazole-4-carboxylate: step 1/2. The sequence is that of Phosphoribosylaminoimidazole-succinocarboxamide synthase from Streptococcus pyogenes serotype M3 (strain ATCC BAA-595 / MGAS315).